A 98-amino-acid chain; its full sequence is NADH-ubiquinone oxidoreductase chain 4L (98 aa).

Transmembrane regions (helical) follow at residues M1–M21, A29–L49, and I61–V81.

This sequence belongs to the complex I subunit 4L family. As to quaternary structure, core subunit of respiratory chain NADH dehydrogenase (Complex I) which is composed of 45 different subunits.

The protein resides in the mitochondrion inner membrane. The enzyme catalyses a ubiquinone + NADH + 5 H(+)(in) = a ubiquinol + NAD(+) + 4 H(+)(out). Functionally, core subunit of the mitochondrial membrane respiratory chain NADH dehydrogenase (Complex I) which catalyzes electron transfer from NADH through the respiratory chain, using ubiquinone as an electron acceptor. Part of the enzyme membrane arm which is embedded in the lipid bilayer and involved in proton translocation. In Megaptera novaeangliae (Humpback whale), this protein is NADH-ubiquinone oxidoreductase chain 4L (MT-ND4L).